A 404-amino-acid polypeptide reads, in one-letter code: Protein IQ-DOMAIN 12 (404 aa).

Residues 8–25 form a calmodulin-binding region; it reads FGWMKRLFICEAKARAEK. The Nuclear localization signal 1 signature appears at 11 to 18; that stretch reads MKRLFICE. 2 consecutive IQ domains span residues 108-135 and 136-158; these read NVAAIKIQSAFRASLARKALRALKALVR and LQAIVRGRAVRRKVSALLKSSHS. The Nuclear localization signal 2 motif lies at 226–233; the sequence is IKRDRMLK.

This sequence belongs to the IQD family. Binds to multiple calmodulin (CaM) in the presence of Ca(2+) and CaM-like proteins.

Its subcellular location is the nucleus. The protein resides in the cell membrane. May be involved in cooperative interactions with calmodulins or calmodulin-like proteins. Recruits calmodulin proteins to microtubules, thus being a potential scaffold in cellular signaling and trafficking. May associate with nucleic acids and regulate gene expression at the transcriptional or post-transcriptional level. The chain is Protein IQ-DOMAIN 12 from Arabidopsis thaliana (Mouse-ear cress).